Consider the following 577-residue polypeptide: Proline--tRNA ligase (577 aa).

It belongs to the class-II aminoacyl-tRNA synthetase family. ProS type 1 subfamily. As to quaternary structure, homodimer.

It is found in the cytoplasm. The catalysed reaction is tRNA(Pro) + L-proline + ATP = L-prolyl-tRNA(Pro) + AMP + diphosphate. In terms of biological role, catalyzes the attachment of proline to tRNA(Pro) in a two-step reaction: proline is first activated by ATP to form Pro-AMP and then transferred to the acceptor end of tRNA(Pro). As ProRS can inadvertently accommodate and process non-cognate amino acids such as alanine and cysteine, to avoid such errors it has two additional distinct editing activities against alanine. One activity is designated as 'pretransfer' editing and involves the tRNA(Pro)-independent hydrolysis of activated Ala-AMP. The other activity is designated 'posttransfer' editing and involves deacylation of mischarged Ala-tRNA(Pro). The misacylated Cys-tRNA(Pro) is not edited by ProRS. In Chlamydia felis (strain Fe/C-56) (Chlamydophila felis), this protein is Proline--tRNA ligase.